Here is a 390-residue protein sequence, read N- to C-terminus: MANITTKETPKITPDLLKNPYQKIINASASVFDEKHGRSFFSPQFYEKIEPYLKEVLTHPIDLECDLNTAKKKNRLTPLKQLFKACFNTEEILIVNNNTSAVFLIANALAQEKEIVVSYGELVGGDFNLKDILLSSGARLHLVGNTSRTYLRDYRLALNENSKMLFKTHNPAFKKDTPFKDLQALAKEHDLIDYYNLGDVDLLDRTALEEVLALKPSLLSFSADKSFNSVQAGIIMGQKEWVETLKNHPLYRALRVDKITLTLLFHSLNAWVNHQEEITIHALLHQTKDALLQKALKLYALLKPLELNVSIASSFSKIGNLFGRELESFCVKIQSKNTRALNGEKLYLRLFQKGVITRISCEFVCFEVFSLNEKDFEKIALVLEEILNKA.

N6-(pyridoxal phosphate)lysine is present on K225.

Belongs to the SelA family. Pyridoxal 5'-phosphate is required as a cofactor.

Its subcellular location is the cytoplasm. The catalysed reaction is L-seryl-tRNA(Sec) + selenophosphate + H(+) = L-selenocysteinyl-tRNA(Sec) + phosphate. It functions in the pathway aminoacyl-tRNA biosynthesis; selenocysteinyl-tRNA(Sec) biosynthesis; selenocysteinyl-tRNA(Sec) from L-seryl-tRNA(Sec) (bacterial route): step 1/1. In terms of biological role, converts seryl-tRNA(Sec) to selenocysteinyl-tRNA(Sec) required for selenoprotein biosynthesis. The polypeptide is L-seryl-tRNA(Sec) selenium transferase (Helicobacter pylori (strain P12)).